A 359-amino-acid chain; its full sequence is MRQILIAVGLALAVSILLTPVLIRLFTRQGFGHEIREDGPPTHHKKRGTPSMGGVAILAGIWVSYLGTHLVGLALDGEGPSASGLLVLGLATALGIVGFIDDLIKIRRARNLGLNKTAKTVGILAAALLFGVLALQFGNADGLTPGSPELSYVREIATVTLAPMIFVLFCVVLVSAWSNAVNFTDGLDGLAAGAMAMVCAAYVLITFWQYRNACATSPGLGCYNVRDPLDLALVAAAAAGACIGFLWWNAAPAKIFMGDTGSLALGGIIAGLSVTSRTEILAVVLGALFVAEVTSVVVQILAFRTTGRRVFRMAPFHHHFELVGWAETTVIIRFWLLTAIACGLGVALFYGEWLTAVGA.

A run of 10 helical transmembrane segments spans residues 3-23, 55-75, 84-104, 120-140, 156-176, 187-207, 231-251, 255-275, 280-300, and 334-354; these read QILI…PVLI, VAIL…GLAL, GLLV…DDLI, TVGI…FGNA, IATV…LVSA, LDGL…LITF, LALV…WNAA, IFMG…LSVT, ILAV…VVQI, and FWLL…GEWL.

It belongs to the glycosyltransferase 4 family. MraY subfamily. It depends on Mg(2+) as a cofactor.

The protein resides in the cell membrane. The catalysed reaction is UDP-N-acetyl-alpha-D-muramoyl-L-alanyl-gamma-D-glutamyl-meso-2,6-diaminopimeloyl-D-alanyl-D-alanine + di-trans,octa-cis-undecaprenyl phosphate = di-trans,octa-cis-undecaprenyl diphospho-N-acetyl-alpha-D-muramoyl-L-alanyl-D-glutamyl-meso-2,6-diaminopimeloyl-D-alanyl-D-alanine + UMP. It participates in cell wall biogenesis; peptidoglycan biosynthesis. Its function is as follows. Catalyzes the initial step of the lipid cycle reactions in the biosynthesis of the cell wall peptidoglycan: transfers peptidoglycan precursor phospho-MurNAc-pentapeptide from UDP-MurNAc-pentapeptide onto the lipid carrier undecaprenyl phosphate, yielding undecaprenyl-pyrophosphoryl-MurNAc-pentapeptide, known as lipid I. The chain is Phospho-N-acetylmuramoyl-pentapeptide-transferase from Mycobacterium sp. (strain MCS).